A 727-amino-acid chain; its full sequence is MLTIFPFLEWMCMYRLKDWLLGDLLAGISVGLVQVPQGLTLSLLARQLIPPLNIAYAAFCSSVIYVIFGSCHQMSIGSFFLVSALLINVLKISPLNNGHLVMGSFLKDEFSAPSYLMGYNKSLSVVATTTFLTGIIQLIMGVLGLGFIATYLPESAMSAYLAAVALHIMLSQLTCIFGIMISFHAGPISFFYDIINYCVALPKANSTSILLFLTVVVALRINKCIRISFNQYPIEFPMELFLIIGFTVIGNKITMATETSQTLIDMIPYSFLFPVTPDFSVLPKIILQAISLSLVSSFLLVFLGKKIASLHNYSVNSNQDLIAIGLCNVVSSFFRSCVFTGAVARTIIQDKSGGRQQFASLVGAGVMLLLMVKMGHFFYALPNAVLAGIILSNVVPYLETISNLPSLWRQDQYDCALWMMTFSSSIFLGLDIGLIISVVSAFFITSVRSHRAKILLLGQIPNTNIYRSVNDYREIITIPGVKIFQCCSSITFVNVYYLKHKLLKEVGMVRVPLKEEEIFSLFNSSDTSLQGEKICRCFCNCDDLEPLPRILYTERFENKLDPDASSVNLIHCSHFESVNTSQTASEDQVPYTVSSMSQKNQGQQYEEVEKVWLPNNSSRNSSPGLPDVAESQGRRSLIPYSDASLLPSVHTIILDFSMVHYVDSQGLVVLRQICNAFRNANILILIAGCHSSLFCTGITLPDHITKCQQLSLNSLSRLPSFHLQHIF.

Topologically, residues 1–23 (MLTIFPFLEWMCMYRLKDWLLGD) are cytoplasmic. Residues 24–44 (LLAGISVGLVQVPQGLTLSLL) form a helical membrane-spanning segment. Topologically, residues 45–47 (ARQ) are extracellular. A helical transmembrane segment spans residues 48 to 68 (LIPPLNIAYAAFCSSVIYVIF). Topologically, residues 69–74 (GSCHQM) are cytoplasmic. Residues 75–95 (SIGSFFLVSALLINVLKISPL) form a helical membrane-spanning segment. Residues 96–130 (NNGHLVMGSFLKDEFSAPSYLMGYNKSLSVVATTT) are Extracellular-facing. N-linked (GlcNAc...) asparagine glycosylation occurs at Asn120. A helical membrane pass occupies residues 131 to 151 (FLTGIIQLIMGVLGLGFIATY). Over 152–160 (LPESAMSAY) the chain is Cytoplasmic. Residues 161–181 (LAAVALHIMLSQLTCIFGIMI) traverse the membrane as a helical segment. Over 182 to 198 (SFHAGPISFFYDIINYC) the chain is Extracellular. Residues 199–219 (VALPKANSTSILLFLTVVVAL) traverse the membrane as a helical segment. The Cytoplasmic portion of the chain corresponds to 220–235 (RINKCIRISFNQYPIE). Residues 236-256 (FPMELFLIIGFTVIGNKITMA) traverse the membrane as a helical segment. Residues 257–283 (TETSQTLIDMIPYSFLFPVTPDFSVLP) are Extracellular-facing. The chain crosses the membrane as a helical span at residues 284-304 (KIILQAISLSLVSSFLLVFLG). Topologically, residues 305–360 (KKIASLHNYSVNSNQDLIAIGLCNVVSSFFRSCVFTGAVARTIIQDKSGGRQQFAS) are cytoplasmic. A helical transmembrane segment spans residues 361-381 (LVGAGVMLLLMVKMGHFFYAL). The Extracellular segment spans residues 382–383 (PN). The helical transmembrane segment at 384-404 (AVLAGIILSNVVPYLETISNL) threads the bilayer. The Cytoplasmic portion of the chain corresponds to 405–424 (PSLWRQDQYDCALWMMTFSS). A helical transmembrane segment spans residues 425–445 (SIFLGLDIGLIISVVSAFFIT). At 446 to 727 (SVRSHRAKIL…LPSFHLQHIF (282 aa)) the chain is on the extracellular side. The STAS domain occupies 471-722 (DYREIITIPG…NSLSRLPSFH (252 aa)). The segment at 592–727 (TVSSMSQKNQ…LPSFHLQHIF (136 aa)) is interaction with RACGAP1.

Belongs to the SLC26A/SulP transporter (TC 2.A.53) family. In terms of assembly, interacts with RACGAP1. Interacts with CFTR; stimulates anion transport activity of CFTR. In terms of processing, N-glycosylated.

The protein localises to the membrane. It catalyses the reaction sulfate(out) + chloride(in) = sulfate(in) + chloride(out). The catalysed reaction is oxalate(in) + chloride(out) = oxalate(out) + chloride(in). Its function is as follows. Antiporter that mediates the exchange of sulfate and oxalate against chloride ions across a membrane. Stimulates anion transport activity of CFTR. May cooperate with CFTR in the regulation of chloride and bicarbonate ions fluxes required for activation of the ADCY10/PKA pathway during sperm motility and sperm capacitation. May play a role in sperm tail differentiation and motility and hence male fertility. The polypeptide is Testis anion transporter 1 (Macaca fascicularis (Crab-eating macaque)).